The following is a 235-amino-acid chain: Tissue factor pathway inhibitor 2 (235 aa).

The signal sequence occupies residues 1 to 22 (MDPARPLGLSILLLFLTEAALG). BPTI/Kunitz inhibitor domains are found at residues 36-86 (CLLP…DDAC), 96-149 (CRLQ…MGFC), and 158-208 (CYSP…KRAC). 9 cysteine pairs are disulfide-bonded: Cys-36–Cys-86, Cys-45–Cys-69, Cys-61–Cys-82, Cys-96–Cys-149, Cys-106–Cys-130, Cys-122–Cys-145, Cys-158–Cys-208, Cys-167–Cys-191, and Cys-183–Cys-204. An N-linked (GlcNAc...) asparagine glycan is attached at Asn-116. Asn-170 carries an N-linked (GlcNAc...) asparagine glycan.

In terms of assembly, finds in a complex with ABCB1, TFPI2 and PPP2R3C; leading to the dephosphorylation of ABCB1. In terms of tissue distribution, umbilical vein endothelial cells, liver, placenta, heart, pancreas, and maternal serum at advanced pregnancy.

It is found in the secreted. Its function is as follows. May play a role in the regulation of plasmin-mediated matrix remodeling. Inhibits trypsin, plasmin, factor VIIa/tissue factor and weakly factor Xa. Has no effect on thrombin. The polypeptide is Tissue factor pathway inhibitor 2 (TFPI2) (Homo sapiens (Human)).